Consider the following 1175-residue polypeptide: 1-phosphatidylinositol 4,5-bisphosphate phosphodiesterase beta-4 (1175 aa).

Ala-2 is subject to N-acetylalanine. A PI-PLC X-box domain is found at 313–463; it reads QEMDHPLAHY…LKRKILIKNK (151 aa). Catalysis depends on residues His-328 and His-375. Residues 487–512 are disordered; sequence AAPASILEDDNEEEIESADQEEEAHP. The span at 493–508 shows a compositional bias: acidic residues; sequence LEDDNEEEIESADQEE. The PI-PLC Y-box domain maps to 565 to 681; that stretch reads LSTMINYAQP…GYLLKPDFMR (117 aa). The C2 domain maps to 684 to 809; sequence DRTFDPFSET…SLRNEGNKPL (126 aa). Disordered regions lie at residues 860 to 904 and 1082 to 1110; these read SDIA…LGSG and KISM…VREL. Polar residues-rich tracts occupy residues 885–900 and 1085–1094; these read VTPQ…TTAA and MENSKAISQD. Thr-886 is subject to Phosphothreonine. A compositionally biased stretch (basic and acidic residues) spans 1095 to 1109; that stretch reads KSIKNKAERERRVRE.

It depends on Ca(2+) as a cofactor. In terms of tissue distribution, preferentially expressed in the retina.

The protein resides in the cell membrane. The enzyme catalyses a 1,2-diacyl-sn-glycero-3-phospho-(1D-myo-inositol-4,5-bisphosphate) + H2O = 1D-myo-inositol 1,4,5-trisphosphate + a 1,2-diacyl-sn-glycerol + H(+). It catalyses the reaction a 1,2-diacyl-sn-glycero-3-phospho-(1D-myo-inositol) + H2O = 1D-myo-inositol 1-phosphate + a 1,2-diacyl-sn-glycerol + H(+). Its function is as follows. Activated phosphatidylinositol-specific phospholipase C enzymes catalyze the production of the second messenger molecules diacylglycerol (DAG) and inositol 1,4,5-trisphosphate (IP3) involved in G-protein coupled receptor signaling pathways. PLCB4 is a direct effector of the endothelin receptor signaling pathway that plays an essential role in lower jaw and middle ear structures development. The polypeptide is 1-phosphatidylinositol 4,5-bisphosphate phosphodiesterase beta-4 (Rattus norvegicus (Rat)).